Consider the following 84-residue polypeptide: uncharacterized protein (84 aa).

Helical transmembrane passes span 7-27 and 52-72; these read HVNF…ILCI and ITII…INPC.

The protein resides in the membrane. This is an uncharacterized protein from Saccharomyces cerevisiae (strain ATCC 204508 / S288c) (Baker's yeast).